We begin with the raw amino-acid sequence, 450 residues long: Glucose-6-phosphate isomerase (450 aa).

The active-site Proton donor is Glu290. Residues His311 and Lys425 contribute to the active site.

The protein belongs to the GPI family.

The protein localises to the cytoplasm. It catalyses the reaction alpha-D-glucose 6-phosphate = beta-D-fructose 6-phosphate. Its pathway is carbohydrate biosynthesis; gluconeogenesis. It functions in the pathway carbohydrate degradation; glycolysis; D-glyceraldehyde 3-phosphate and glycerone phosphate from D-glucose: step 2/4. In terms of biological role, catalyzes the reversible isomerization of glucose-6-phosphate to fructose-6-phosphate. This chain is Glucose-6-phosphate isomerase, found in Limosilactobacillus fermentum (Lactobacillus fermentum).